A 119-amino-acid chain; its full sequence is Large ribosomal subunit protein bL12 (119 aa).

The protein belongs to the bacterial ribosomal protein bL12 family. Homodimer. Part of the ribosomal stalk of the 50S ribosomal subunit. Forms a multimeric L10(L12)X complex, where L10 forms an elongated spine to which 2 to 4 L12 dimers bind in a sequential fashion. Binds GTP-bound translation factors.

Functionally, forms part of the ribosomal stalk which helps the ribosome interact with GTP-bound translation factors. Is thus essential for accurate translation. This chain is Large ribosomal subunit protein bL12, found in Bacillus cytotoxicus (strain DSM 22905 / CIP 110041 / 391-98 / NVH 391-98).